Here is a 372-residue protein sequence, read N- to C-terminus: Peptide chain release factor 1 (372 aa).

An N5-methylglutamine modification is found at Gln237.

The protein belongs to the prokaryotic/mitochondrial release factor family. Methylated by PrmC. Methylation increases the termination efficiency of RF1.

The protein localises to the cytoplasm. Its function is as follows. Peptide chain release factor 1 directs the termination of translation in response to the peptide chain termination codons UAG and UAA. The chain is Peptide chain release factor 1 from Anaeromyxobacter sp. (strain Fw109-5).